We begin with the raw amino-acid sequence, 415 residues long: Ribulose bisphosphate carboxylase/oxygenase activase (415 aa).

Glycine 37–threonine 44 provides a ligand contact to ATP.

It belongs to the RuBisCO activase family.

Its function is as follows. Activation of RuBisCO (ribulose-1,5-bisohosphate carboxylase/oxygenase; EC 4.1.1.39) involves the ATP-dependent carboxylation of the epsilon-amino group of lysine leading to a carbamate structure. The chain is Ribulose bisphosphate carboxylase/oxygenase activase (rca) from Anabaena sp. (strain CA / ATCC 33047).